Reading from the N-terminus, the 1109-residue chain is Cation channel sperm-associated auxiliary subunit beta (1109 aa).

Over Met-1–Pro-1055 the chain is Extracellular. Residues Cys-35 and Cys-60 are joined by a disulfide bond. 3 N-linked (GlcNAc...) asparagine glycosylation sites follow: Asn-66, Asn-90, and Asn-118. A disulfide bridge connects residues Cys-189 and Cys-302. N-linked (GlcNAc...) asparagine glycosylation occurs at Asn-321. A disulfide bridge links Cys-330 with Cys-343. Asn-672 carries N-linked (GlcNAc...) asparagine glycosylation. 4 disulfide bridges follow: Cys-720–Cys-818, Cys-831–Cys-1039, Cys-913–Cys-922, and Cys-924–Cys-939. N-linked (GlcNAc...) asparagine glycans are attached at residues Asn-915 and Asn-923. Residue Asn-1017 is glycosylated (N-linked (GlcNAc...) asparagine). Residues Phe-1056 to Phe-1078 form a helical membrane-spanning segment. At Val-1079–Ser-1109 the chain is on the cytoplasmic side.

As to quaternary structure, component of the CatSper complex or CatSpermasome composed of the core pore-forming members CATSPER1, CATSPER2, CATSPER3 and CATSPER4 as well as auxiliary members CATSPERB, CATSPERG2, CATSPERD, CATSPERE, CATSPERZ, C2CD6/CATSPERT, SLCO6C1, TMEM249, TMEM262 and EFCAB9. HSPA1 may be an additional auxiliary complex member. The core complex members CATSPER1, CATSPER2, CATSPER3 and CATSPER4 form a heterotetrameric channel. The auxiliary CATSPERB, CATSPERG2, CATSPERD and CATSPERE subunits form a pavilion-like structure over the pore which stabilizes the complex through interactions with CATSPER4, CATSPER3, CATSPER1 and CATSPER2 respectively. SLCO6C1 interacts with CATSPERE and TMEM262/CATSPERH interacts with CATSPERB, further stabilizing the complex. C2CD6/CATSPERT interacts at least with CATSPERD and is required for targeting the CatSper complex in the flagellar membrane. As to expression, testis-specific. Specifically present in the principal piece of sperm tail (at protein level). Specifically expressed in the seminiferous tubules but not in the interstitial cells. Within the tubules, it is expressed in spermatocytes and spermatids, but not in spermatogonia.

It is found in the cell projection. It localises to the cilium. Its subcellular location is the flagellum membrane. In terms of biological role, auxiliary component of the CatSper complex, a complex involved in sperm cell hyperactivation. Sperm cell hyperactivation is needed for sperm motility which is essential late in the preparation of sperm for fertilization. This is Cation channel sperm-associated auxiliary subunit beta from Mus musculus (Mouse).